Consider the following 452-residue polypeptide: 23S rRNA (uracil(1939)-C(5))-methyltransferase RlmD (452 aa).

The disordered stretch occupies residues 1–25; the sequence is MSKKKSNSGLRFQPAGGNRTPQVPV. The region spanning 22 to 80 is the TRAM domain; the sequence is QVPVGKKQRLDIERLAGDGRGIAFLDGRTWFVSGALAGEAVEARVLNARGKVVEARLER. Residues Cys93, Cys99, Cys102, and Cys181 each contribute to the [4Fe-4S] cluster site. Residues Gln285, Phe314, Asn319, Glu335, Asp362, and Asp383 each contribute to the S-adenosyl-L-methionine site. Cys409 serves as the catalytic Nucleophile.

This sequence belongs to the class I-like SAM-binding methyltransferase superfamily. RNA M5U methyltransferase family. RlmD subfamily.

The catalysed reaction is uridine(1939) in 23S rRNA + S-adenosyl-L-methionine = 5-methyluridine(1939) in 23S rRNA + S-adenosyl-L-homocysteine + H(+). Catalyzes the formation of 5-methyl-uridine at position 1939 (m5U1939) in 23S rRNA. This Pseudomonas putida (strain ATCC 47054 / DSM 6125 / CFBP 8728 / NCIMB 11950 / KT2440) protein is 23S rRNA (uracil(1939)-C(5))-methyltransferase RlmD.